We begin with the raw amino-acid sequence, 181 residues long: ADP-ribosylation factor 1 (181 aa).

Residue Gly-2 is the site of N-myristoyl glycine attachment. Residues 25–32 (LDGAGKTT), Thr-48, Gly-70, 126–129 (NKQD), and 160–161 (AT) each bind GTP. Residue Lys-127 forms a Glycyl lysine isopeptide (Lys-Gly) (interchain with G-Cter in ubiquitin) linkage.

It belongs to the small GTPase superfamily. Arf family. In terms of assembly, interacts with RUD3. Interacts with VPS13 (via C-terminal part); the interaction is direct.

The protein resides in the golgi apparatus. The enzyme catalyses GTP + H2O = GDP + phosphate + H(+). Its function is as follows. GTP-binding protein involved in Golgi vesicle trafficking. May modulate vesicle budding and uncoating within the Golgi apparatus. May recruit the lipid transfer protein VPS13 to Golgi membranes. Recruits polyadenylate-binding protein PAB1 to COPI vesicles, and this is required for correct localization of the asymmetrically distributed ASH1 mRNA. The chain is ADP-ribosylation factor 1 (ARF1) from Saccharomyces cerevisiae (strain ATCC 204508 / S288c) (Baker's yeast).